The following is a 224-amino-acid chain: UPF0758 protein Avin_02940 (224 aa).

An MPN domain is found at 102–224 (ALESPQAVRD…PLSMAEQGWL (123 aa)). Residues H173, H175, and D186 each contribute to the Zn(2+) site. The short motif at 173 to 186 (HNHPSGIAEPSQAD) is the JAMM motif element.

This sequence belongs to the UPF0758 family.

The protein is UPF0758 protein Avin_02940 of Azotobacter vinelandii (strain DJ / ATCC BAA-1303).